Here is a 133-residue protein sequence, read N- to C-terminus: Protein NrdI (133 aa).

This sequence belongs to the NrdI family.

Probably involved in ribonucleotide reductase function. The chain is Protein NrdI from Escherichia coli O17:K52:H18 (strain UMN026 / ExPEC).